Reading from the N-terminus, the 1273-residue chain is Lysine-specific histone demethylase 2 (1273 aa).

A compositionally biased stretch (polar residues) spans 199–230; it reads ENFFDANSPSSQQFPSTYPSRSQNPLSSSGDG. The disordered stretch occupies residues 199 to 237; the sequence is ENFFDANSPSSQQFPSTYPSRSQNPLSSSGDGSTAIHAG. Residues 247-307 are a coiled coil; it reads FSNYPYPLDA…LSKSVDNAVL (61 aa). Positions 394-490 constitute an SWIRM domain; it reads AAEAARKCNL…YGCLSFDSSF (97 aa). Residues 509–551, Thr517, Glu550, Arg558, and 572–573 contribute to the FAD site; these read IAVV…ILEA and TQ. The demethylase activity stretch occupies residues 542-1198; it reads LPPKVIILEA…GKILRYQRLT (657 aa). The disordered stretch occupies residues 571 to 596; sequence ATQINHHTSNSNSISSNSTSLNPKDV. Residues 574 to 590 are compositionally biased toward low complexity; it reads INHHTSNSNSISSNSTS. A coiled-coil region spans residues 681 to 767; sequence SVRISWISQF…NTVDTDFSKD (87 aa). The HMG box DNA-binding region spans 1115–1195; the sequence is SKPNANPFLL…AYAGKILRYQ (81 aa). Residues Asp1147 and 1156-1157 each bind FAD; that span reads ET. Residues 1215 to 1273 form a disordered region; the sequence is KCQDEPIPDDEARLFMQAQREEEQRKQTQDDNISKSREASDEEYHDDGSSDSGYNGTRY. The segment covering 1233–1253 has biased composition (basic and acidic residues); the sequence is QREEEQRKQTQDDNISKSREA. Over residues 1264-1273 the composition is skewed to polar residues; it reads SDSGYNGTRY.

The protein belongs to the flavin monoamine oxidase family. As to quaternary structure, component of the SWM histone demethylase complex composed of at least lsd1, lsd2, phf1 and phf2. Interacts directly with lsd1. FAD serves as cofactor.

Its subcellular location is the nucleus. Functionally, catalytic component of the SWM histone demethylase complex that specifically demethylates H3K9me2, a specific tag for epigenetic transcriptional activation, thereby acting as a corepressor. Acts by oxidizing the substrate by FAD to generate the corresponding imine that is subsequently hydrolyzed. Has a role in regulating heterochromatin propagation and euchromatic transcription. Also has a gene activating role. In Schizosaccharomyces pombe (strain 972 / ATCC 24843) (Fission yeast), this protein is Lysine-specific histone demethylase 2 (lsd2).